A 201-amino-acid polypeptide reads, in one-letter code: Receptor expression-enhancing protein 1 (201 aa).

2 helical membrane passes run 1 to 21 and 35 to 55; these read MVSWIISRLVVLIFGTLYPAY and YVKWMMYWIIFALFTTAETFT. A Phosphoserine modification is found at S152. The disordered stretch occupies residues 158 to 201; that stretch reads TIRGDGAPAPSGPPPPGTGRSSGKHSQPKMSRSASESAGSSGTA. Residues 188 to 201 are compositionally biased toward low complexity; the sequence is SRSASESAGSSGTA.

Belongs to the DP1 family. In terms of assembly, interacts with OLFR992. Interacts with SPAST and ATL1. Interacts (via C-terminus) with microtubules. Interacts with ZFYVE27. Detected in olfactory sensory neurons of the olfactory epithelium, and in total brain.

The protein resides in the membrane. Its subcellular location is the mitochondrion membrane. It localises to the endoplasmic reticulum. Functionally, required for endoplasmic reticulum (ER) network formation, shaping and remodeling; it links ER tubules to the cytoskeleton. May also enhance the cell surface expression of odorant receptors. The protein is Receptor expression-enhancing protein 1 (Reep1) of Mus musculus (Mouse).